Reading from the N-terminus, the 111-residue chain is Large ribosomal subunit protein uL22 (111 aa).

This sequence belongs to the universal ribosomal protein uL22 family. As to quaternary structure, part of the 50S ribosomal subunit.

Its function is as follows. This protein binds specifically to 23S rRNA; its binding is stimulated by other ribosomal proteins, e.g. L4, L17, and L20. It is important during the early stages of 50S assembly. It makes multiple contacts with different domains of the 23S rRNA in the assembled 50S subunit and ribosome. In terms of biological role, the globular domain of the protein is located near the polypeptide exit tunnel on the outside of the subunit, while an extended beta-hairpin is found that lines the wall of the exit tunnel in the center of the 70S ribosome. In Protochlamydia amoebophila (strain UWE25), this protein is Large ribosomal subunit protein uL22.